The following is a 493-amino-acid chain: 3-octaprenyl-4-hydroxybenzoate carboxy-lyase (493 aa).

N172 is a binding site for Mn(2+). Residues 175–177 (IYR), 189–191 (RWL), and 194–195 (RG) each bind prenylated FMN. E238 provides a ligand contact to Mn(2+). Catalysis depends on D287, which acts as the Proton donor.

Belongs to the UbiD family. Homohexamer. Requires prenylated FMN as cofactor. It depends on Mn(2+) as a cofactor.

The protein localises to the cell membrane. The enzyme catalyses a 4-hydroxy-3-(all-trans-polyprenyl)benzoate + H(+) = a 2-(all-trans-polyprenyl)phenol + CO2. The protein operates within cofactor biosynthesis; ubiquinone biosynthesis. Catalyzes the decarboxylation of 3-octaprenyl-4-hydroxy benzoate to 2-octaprenylphenol, an intermediate step in ubiquinone biosynthesis. The chain is 3-octaprenyl-4-hydroxybenzoate carboxy-lyase from Shewanella sp. (strain MR-4).